Reading from the N-terminus, the 87-residue chain is Small ribosomal subunit protein uS15c (87 aa).

The protein belongs to the universal ribosomal protein uS15 family. As to quaternary structure, part of the 30S ribosomal subunit.

Its subcellular location is the plastid. The protein localises to the chloroplast. This Atropa belladonna (Belladonna) protein is Small ribosomal subunit protein uS15c (rps15).